The primary structure comprises 60 residues: MAQIKITLTKSPIGRIPSQRKTVVALGLGKLNSSVIKEDNAAIRGMITAVSHLVTVEEVN.

Belongs to the universal ribosomal protein uL30 family. Part of the 50S ribosomal subunit.

This chain is Large ribosomal subunit protein uL30, found in Streptococcus pneumoniae serotype 2 (strain D39 / NCTC 7466).